Consider the following 139-residue polypeptide: D-ribose pyranase (139 aa).

The active-site Proton donor is the H20. Substrate-binding positions include D28, H106, and 128–130 (YAN).

Belongs to the RbsD / FucU family. RbsD subfamily. As to quaternary structure, homodecamer.

It localises to the cytoplasm. It carries out the reaction beta-D-ribopyranose = beta-D-ribofuranose. It functions in the pathway carbohydrate metabolism; D-ribose degradation; D-ribose 5-phosphate from beta-D-ribopyranose: step 1/2. Catalyzes the interconversion of beta-pyran and beta-furan forms of D-ribose. This is D-ribose pyranase from Escherichia coli O139:H28 (strain E24377A / ETEC).